Consider the following 670-residue polypeptide: tRNA 5-methylaminomethyl-2-thiouridine biosynthesis bifunctional protein MnmC (670 aa).

Residues 1-242 (MTFSVQHAEI…KRECLSGLKI (242 aa)) form a tRNA (mnm(5)s(2)U34)-methyltransferase region. Residues 269-670 (IGGGIASLCA…KKWLKGSKVE (402 aa)) form an FAD-dependent cmnm(5)s(2)U34 oxidoreductase region.

The protein in the N-terminal section; belongs to the methyltransferase superfamily. tRNA (mnm(5)s(2)U34)-methyltransferase family. It in the C-terminal section; belongs to the DAO family. FAD is required as a cofactor.

The protein resides in the cytoplasm. The catalysed reaction is 5-aminomethyl-2-thiouridine(34) in tRNA + S-adenosyl-L-methionine = 5-methylaminomethyl-2-thiouridine(34) in tRNA + S-adenosyl-L-homocysteine + H(+). Its function is as follows. Catalyzes the last two steps in the biosynthesis of 5-methylaminomethyl-2-thiouridine (mnm(5)s(2)U) at the wobble position (U34) in tRNA. Catalyzes the FAD-dependent demodification of cmnm(5)s(2)U34 to nm(5)s(2)U34, followed by the transfer of a methyl group from S-adenosyl-L-methionine to nm(5)s(2)U34, to form mnm(5)s(2)U34. The polypeptide is tRNA 5-methylaminomethyl-2-thiouridine biosynthesis bifunctional protein MnmC (Haemophilus influenzae (strain ATCC 51907 / DSM 11121 / KW20 / Rd)).